A 358-amino-acid polypeptide reads, in one-letter code: Stearoyl-CoA desaturase 2 (358 aa).

Residues 1–71 (MPAHILQEIS…EGPPPKLEYV (71 aa)) are Cytoplasmic-facing. The disordered stretch occupies residues 14–43 (SATTTITAPPSGGQQNGGEKFEKNPHHWGA). The span at 32–43 (EKFEKNPHHWGA) shows a compositional bias: basic and acidic residues. Residues 72–92 (WRNIVLMALLHIGALYGITLV) form a helical membrane-spanning segment. A substrate-binding site is contributed by Asn-74. The Lumenal segment spans residues 93–96 (PSCK). The chain crosses the membrane as a helical span at residues 97–117 (VYTCLFAYLYYVISALGITAG). Residues 118–216 (AHRLWSHRTY…EKLVMFQRRY (99 aa)) lie on the Cytoplasmic side of the membrane. Fe cation contacts are provided by His-119 and His-124. A Histidine box-1 motif is present at residues 119 to 124 (HRLWSH). 3 residues coordinate substrate: Asn-147, Arg-154, and Asp-155. Residues His-156, His-159, and His-160 each contribute to the Fe cation site. Residues 156 to 160 (HRAHH) carry the Histidine box-2 motif. Residues Arg-187 and Lys-188 each coordinate substrate. Residues 217–236 (YKPGLLLMCFILPTLVPWYC) traverse the membrane as a helical segment. Residues 237–240 (WGET) lie on the Lumenal side of the membrane. A helical transmembrane segment spans residues 241 to 262 (FVNSLCVSTFLRYAVVLNATWL). Substrate is bound at residue Trp-261. Over 263 to 358 (VNSAAHLYGY…RTGEESCKSG (96 aa)) the chain is Cytoplasmic. 4 residues coordinate Fe cation: His-268, His-297, His-300, and His-301. The Histidine box-3 motif lies at 297–301 (HNYHH).

This sequence belongs to the fatty acid desaturase type 1 family. Fe(2+) is required as a cofactor. Detected in brain and adipose tissue, and at much lower levels in testis. Detected in liver when rats are kept on a fat-free diet, but not when their food contains unsaturated fatty acids.

Its subcellular location is the endoplasmic reticulum membrane. It localises to the microsome membrane. The catalysed reaction is octadecanoyl-CoA + 2 Fe(II)-[cytochrome b5] + O2 + 2 H(+) = (9Z)-octadecenoyl-CoA + 2 Fe(III)-[cytochrome b5] + 2 H2O. It carries out the reaction hexadecanoyl-CoA + 2 Fe(II)-[cytochrome b5] + O2 + 2 H(+) = (9Z)-hexadecenoyl-CoA + 2 Fe(III)-[cytochrome b5] + 2 H2O. Functionally, stearoyl-CoA desaturase that utilizes O(2) and electrons from reduced cytochrome b5 to introduce the first double bond into saturated fatty acyl-CoA substrates. Catalyzes the insertion of a cis double bond at the delta-9 position into fatty acyl-CoA substrates including palmitoyl-CoA and stearoyl-CoA. Gives rise to a mixture of 16:1 and 18:1 unsaturated fatty acids. Contributes to the biosynthesis of membrane phospholipids, cholesterol esters and triglycerides, especially during embryonic development and in neonates. Important for normal permeability barrier function of the skin in neonates. The sequence is that of Stearoyl-CoA desaturase 2 (Scd2) from Rattus norvegicus (Rat).